The primary structure comprises 170 residues: Probable chorismate pyruvate-lyase (170 aa).

Substrate-binding residues include arginine 77, leucine 114, and glutamate 157.

Belongs to the UbiC family.

The protein localises to the cytoplasm. It catalyses the reaction chorismate = 4-hydroxybenzoate + pyruvate. It functions in the pathway cofactor biosynthesis; ubiquinone biosynthesis. Its function is as follows. Removes the pyruvyl group from chorismate, with concomitant aromatization of the ring, to provide 4-hydroxybenzoate (4HB) for the ubiquinone pathway. The protein is Probable chorismate pyruvate-lyase of Pasteurella multocida (strain Pm70).